A 57-amino-acid chain; its full sequence is Large ribosomal subunit protein bL32 (57 aa).

This sequence belongs to the bacterial ribosomal protein bL32 family.

The sequence is that of Large ribosomal subunit protein bL32 from Geobacillus sp. (strain WCH70).